We begin with the raw amino-acid sequence, 210 residues long: Protein-methionine-sulfoxide reductase heme-binding subunit MsrQ (210 aa).

6 consecutive transmembrane segments (helical) span residues 8–28 (LAVFLAACVAPVWWLYQAWIF), 37–57 (VLVENFGLATLVMLLITLAMT), 75–95 (LGLWCFAYVVLHMTMYALFIL), 110–130 (PYIIVGALAFLGLLALAVTSN), 147–167 (LVYVILGLGLLHMFWIVRADL), and 169–189 (EWALYAGIGAILLLLRVPMIA).

This sequence belongs to the MsrQ family. As to quaternary structure, heterodimer of a catalytic subunit (MsrP) and a heme-binding subunit (MsrQ). FMN is required as a cofactor. Heme b serves as cofactor.

The protein resides in the cell inner membrane. Part of the MsrPQ system that repairs oxidized periplasmic proteins containing methionine sulfoxide residues (Met-O), using respiratory chain electrons. Thus protects these proteins from oxidative-stress damage caused by reactive species of oxygen and chlorine generated by the host defense mechanisms. MsrPQ is essential for the maintenance of envelope integrity under bleach stress, rescuing a wide series of structurally unrelated periplasmic proteins from methionine oxidation. MsrQ provides electrons for reduction to the reductase catalytic subunit MsrP, using the quinone pool of the respiratory chain. This chain is Protein-methionine-sulfoxide reductase heme-binding subunit MsrQ, found in Pseudomonas syringae pv. tomato (strain ATCC BAA-871 / DC3000).